A 295-amino-acid polypeptide reads, in one-letter code: Virginiamycin B lyase (295 aa).

His-227 contacts substrate. A Mg(2+)-binding site is contributed by Glu-267. The active-site Proton acceptor is the His-269. Mg(2+) is bound at residue Glu-284.

It belongs to the Vgb family. Monomer. Mg(2+) serves as cofactor.

In terms of biological role, inactivates the type B streptogramin antibiotics by linearizing the lactone ring at the ester linkage, generating a free phenylglycine carboxylate and converting the threonyl moiety into 2-amino-butenoic acid. This Bacillus licheniformis (strain ATCC 14580 / DSM 13 / JCM 2505 / CCUG 7422 / NBRC 12200 / NCIMB 9375 / NCTC 10341 / NRRL NRS-1264 / Gibson 46) protein is Virginiamycin B lyase.